The primary structure comprises 164 residues: Choriogonadotropin subunit beta (164 aa).

A signal peptide spans Met-1–Ala-20. Cystine bridges form between Cys-29–Cys-77, Cys-43–Cys-92, Cys-46–Cys-130, Cys-54–Cys-108, Cys-58–Cys-110, and Cys-113–Cys-120. The N-linked (GlcNAc...) asparagine glycan is linked to Asn-50. The tract at residues His-133 to Gln-164 is disordered. O-linked (GalNAc...) serine glycosylation is present at Ser-140. Asn-146 is a glycosylation site (N-linked (GlcNAc...) asparagine). An O-linked (GalNAc...) serine glycan is attached at Ser-151.

Belongs to the glycoprotein hormones subunit beta family. Heterodimer of a common alpha chain and a unique beta chain which confers biological specificity to thyrotropin, lutropin, follitropin and gonadotropin.

Its subcellular location is the secreted. Stimulates the ovaries to synthesize the steroids that are essential for the maintenance of pregnancy. This chain is Choriogonadotropin subunit beta (CGB), found in Aotus nancymaae (Ma's night monkey).